The sequence spans 244 residues: Krueppel-like factor 9 (244 aa).

Disordered stretches follow at residues 24–51 (VPEHGGAPDAERLRLPEREVTKEHGDPG) and 79–143 (PSVC…EKRH). Residues 32 to 51 (DAERLRLPEREVTKEHGDPG) are compositionally biased toward basic and acidic residues. Ser-122 carries the post-translational modification Phosphoserine. Over residues 134–143 (KGKHASEKRH) the composition is skewed to basic residues. 3 C2H2-type zinc fingers span residues 143–167 (HKCPYSGCGKVYGKSSHLKAHYRVH), 173–197 (FPCTWPDCLKKFSRSDELTRHYRTH), and 203–225 (FRCPLCEKRFMRSDHLTKHARRH).

This sequence belongs to the Sp1 C2H2-type zinc-finger protein family. As to quaternary structure, interacts with ZZEF1.

The protein resides in the nucleus. In terms of biological role, transcription factor that binds to GC box promoter elements. Selectively activates mRNA synthesis from genes containing tandem repeats of GC boxes but represses genes with a single GC box. Acts as an epidermal circadian transcription factor regulating keratinocyte proliferation. In Rattus norvegicus (Rat), this protein is Krueppel-like factor 9 (Klf9).